We begin with the raw amino-acid sequence, 372 residues long: Queuine tRNA-ribosyltransferase (372 aa).

The Proton acceptor role is filled by Asp89. Substrate contacts are provided by residues 89 to 93, Asp161, and Gly232; that span reads DSGGF. An RNA binding region spans residues 262–268; the sequence is GIGDLPS. Asp281 serves as the catalytic Nucleophile. Residues 286–290 are RNA binding; important for wobble base 34 recognition; it reads TKAAR. Zn(2+) contacts are provided by Cys319, Cys321, Cys324, and His351.

Belongs to the queuine tRNA-ribosyltransferase family. Homodimer. Within each dimer, one monomer is responsible for RNA recognition and catalysis, while the other monomer binds to the replacement base PreQ1. The cofactor is Zn(2+).

The catalysed reaction is 7-aminomethyl-7-carbaguanine + guanosine(34) in tRNA = 7-aminomethyl-7-carbaguanosine(34) in tRNA + guanine. It functions in the pathway tRNA modification; tRNA-queuosine biosynthesis. Its function is as follows. Catalyzes the base-exchange of a guanine (G) residue with the queuine precursor 7-aminomethyl-7-deazaguanine (PreQ1) at position 34 (anticodon wobble position) in tRNAs with GU(N) anticodons (tRNA-Asp, -Asn, -His and -Tyr). Catalysis occurs through a double-displacement mechanism. The nucleophile active site attacks the C1' of nucleotide 34 to detach the guanine base from the RNA, forming a covalent enzyme-RNA intermediate. The proton acceptor active site deprotonates the incoming PreQ1, allowing a nucleophilic attack on the C1' of the ribose to form the product. After dissociation, two additional enzymatic reactions on the tRNA convert PreQ1 to queuine (Q), resulting in the hypermodified nucleoside queuosine (7-(((4,5-cis-dihydroxy-2-cyclopenten-1-yl)amino)methyl)-7-deazaguanosine). In Chlamydia muridarum (strain MoPn / Nigg), this protein is Queuine tRNA-ribosyltransferase.